The primary structure comprises 191 residues: Ribonuclease HII (191 aa).

The 188-residue stretch at Tyr-4–Gln-191 folds into the RNase H type-2 domain. A divalent metal cation contacts are provided by Asp-10, Glu-11, and Asp-106.

Belongs to the RNase HII family. Mn(2+) serves as cofactor. Mg(2+) is required as a cofactor.

Its subcellular location is the cytoplasm. The catalysed reaction is Endonucleolytic cleavage to 5'-phosphomonoester.. In terms of biological role, endonuclease that specifically degrades the RNA of RNA-DNA hybrids. In Prochlorococcus marinus (strain SARG / CCMP1375 / SS120), this protein is Ribonuclease HII.